Reading from the N-terminus, the 218-residue chain is MLITGFPAGMLQCNCYVLADRAGTDAVIVDPGQRAMGPLRRILDENRLTPSAVLLTHGHIDHMWSAQKVSDTYGCPTYIHPEDRFMLTDPLFGFGPRVAQVVTGAFFREPKQVVELDRDGDKLDLGSVTVNVDHTPGHTRGSVCFWVAADTDVVLTGDTLFERTIGRTDLFGGSGRDLYRSIVEKLLVLDDKTVVLPGHGNSTTIGAERRFNPFLEGL.

Zn(2+) contacts are provided by H57, H59, D61, H62, H138, D158, and H199.

The protein belongs to the metallo-beta-lactamase superfamily. Glyoxalase II family. Zn(2+) serves as cofactor.

This is an uncharacterized protein from Mycobacterium leprae (strain TN).